A 439-amino-acid chain; its full sequence is Xylose isomerase (439 aa).

Catalysis depends on residues His101 and Asp104. Mg(2+)-binding residues include Glu232, Glu268, His271, Asp296, Asp307, Asp309, and Asp339.

The protein belongs to the xylose isomerase family. As to quaternary structure, homotetramer. Mg(2+) serves as cofactor.

It is found in the cytoplasm. The catalysed reaction is alpha-D-xylose = alpha-D-xylulofuranose. This chain is Xylose isomerase (xylA), found in Thermoanaerobacterium thermosaccharolyticum (strain ATCC 7956 / DSM 571 / NCIMB 9385 / NCA 3814 / NCTC 13789 / WDCM 00135 / 2032) (Clostridium thermosaccharolyticum).